Consider the following 77-residue polypeptide: Putative sulfur carrier protein YedF (77 aa).

Residue C17 is the Cysteine persulfide intermediate of the active site.

Belongs to the sulfur carrier protein TusA family.

The chain is Putative sulfur carrier protein YedF (yedF) from Escherichia coli O157:H7.